The primary structure comprises 506 residues: Lysine--tRNA ligase (506 aa).

Mg(2+) is bound by residues Glu-416 and Glu-423.

Belongs to the class-II aminoacyl-tRNA synthetase family. As to quaternary structure, homodimer. Requires Mg(2+) as cofactor.

The protein localises to the cytoplasm. It catalyses the reaction tRNA(Lys) + L-lysine + ATP = L-lysyl-tRNA(Lys) + AMP + diphosphate. The protein is Lysine--tRNA ligase of Pelotomaculum thermopropionicum (strain DSM 13744 / JCM 10971 / SI).